The following is a 354-amino-acid chain: Zinc finger protein 346 (354 aa).

Matrin-type zinc fingers lie at residues 34–64, 95–125, 165–195, and 232–262; these read TQCKVCSAVLISESQKLAHYQSRKHANKVRR, KCCPICNMTFSSPVVAESHYSGKTHIKNLRL, KFCKLCHATFNNPLMAEQHYAGKKHKKQETK, and FSCDTCNIVLNSIEQYQAHVSGAKHKNQLMS. C36, C39, H52, H58, C97, C100, H113, and H119 together coordinate Zn(2+). The interval 263–343 is disordered; sequence MTPLSKEGPP…QPYVREDMMG (81 aa). 2 stretches are compositionally biased toward low complexity: residues 270–289 and 310–323; these read GPPAAGGPSALAGPPSTGGA and GPSSFGGLPPMGGL. Residues 324–333 are compositionally biased toward pro residues; that stretch reads MPPPYPPPHS.

It is found in the nucleus. The protein resides in the cytoplasm. Its function is as follows. Binds preferentially to dsRNA, but also to RNA-DNA hybrids. In Xenopus tropicalis (Western clawed frog), this protein is Zinc finger protein 346.